The following is a 132-amino-acid chain: Small ribosomal subunit protein uS8c (132 aa).

The protein belongs to the universal ribosomal protein uS8 family. As to quaternary structure, part of the 30S ribosomal subunit.

The protein localises to the plastid. It is found in the cyanelle. In terms of biological role, one of the primary rRNA binding proteins, it binds directly to 16S rRNA central domain where it helps coordinate assembly of the platform of the 30S subunit. This Cyanophora paradoxa protein is Small ribosomal subunit protein uS8c (rps8).